The primary structure comprises 123 residues: Large ribosomal subunit protein uL29 (123 aa).

Lysine 19 bears the N6-acetyllysine mark. A Glycyl lysine isopeptide (Lys-Gly) (interchain with G-Cter in SUMO2) cross-link involves residue lysine 25. The residue at position 29 (serine 29) is a Phosphoserine. Lysine 43 is modified (N6-acetyllysine). The tract at residues 95 to 114 (LNKHEENLKTKKQQRKERLY) is disordered.

The protein belongs to the universal ribosomal protein uL29 family. As to quaternary structure, component of the large ribosomal subunit.

The protein resides in the cytoplasm. Component of the large ribosomal subunit. The ribosome is a large ribonucleoprotein complex responsible for the synthesis of proteins in the cell. The sequence is that of Large ribosomal subunit protein uL29 (RPL35) from Bos taurus (Bovine).